Consider the following 98-residue polypeptide: Integration host factor subunit alpha (98 aa).

The segment at 49-70 is disordered; that stretch reads FGNFDLRDKNQRPGRNPKTGED.

Belongs to the bacterial histone-like protein family. As to quaternary structure, heterodimer of an alpha and a beta chain.

Functionally, this protein is one of the two subunits of integration host factor, a specific DNA-binding protein that functions in genetic recombination as well as in transcriptional and translational control. In Yersinia pestis, this protein is Integration host factor subunit alpha.